The primary structure comprises 79 residues: Sulfur carrier protein TusA (79 aa).

The Cysteine persulfide intermediate role is filled by C17.

This sequence belongs to the sulfur carrier protein TusA family.

It is found in the cytoplasm. Sulfur carrier protein which probably makes part of a sulfur-relay system. The chain is Sulfur carrier protein TusA from Mannheimia succiniciproducens (strain KCTC 0769BP / MBEL55E).